The following is a 445-amino-acid chain: Tripartite motif-containing protein 43B (445 aa).

Residues 16–57 form an RING-type zinc finger; it reads CSICQGIFMNPVYLKCGHKFCEACLLLFQEDIKFPAYCPMCM. Residues 88 to 129 form a B box-type zinc finger; sequence SEEHKCVTHKAKKMIFCDKSKILLCHLCSDSQEHSGHTHCSI. The Zn(2+) site is built by Cys93, His96, Cys115, and His121. Positions 271–445 constitute a B30.2/SPRY domain; that stretch reads RLRAHSIPGL…VRPFFSAVYT (175 aa).

This sequence belongs to the TRIM/RBCC family.

This Mus musculus (Mouse) protein is Tripartite motif-containing protein 43B.